The primary structure comprises 95 residues: MPRSTNKGPFVDHHLMKKVDQAQKEGSKRPIKTWSRRSMVVPEMVGLTIAIHNGRQHVPVYISENMVGHKLGEFAITRTFRAHSGDRKAKKEGEK.

The protein belongs to the universal ribosomal protein uS19 family.

Its function is as follows. Protein S19 forms a complex with S13 that binds strongly to the 16S ribosomal RNA. The polypeptide is Small ribosomal subunit protein uS19 (Coxiella burnetii (strain CbuK_Q154) (Coxiella burnetii (strain Q154))).